The following is a 191-amino-acid chain: Calcium-activated potassium channel subunit beta-1 (191 aa).

Over 1 to 18 (MVKKLVMAQKRGETRALC) the chain is Cytoplasmic. The chain crosses the membrane as a helical span at residues 19 to 39 (LGVTMVVCAVITYYILVTTVL). Over 40-157 (PLYQKSVWTQ…FQRLYGPQAL (118 aa)) the chain is Extracellular. Asn80 and Asn142 each carry an N-linked (GlcNAc...) asparagine glycan. The helical transmembrane segment at 158-178 (LFSLFWPTFLLTGGLLIIAMV) threads the bilayer. The Cytoplasmic segment spans residues 179–191 (KSNQYLSILAAQK).

Belongs to the KCNMB (TC 8.A.14.1) family. KCNMB1 subfamily. In terms of assembly, interacts with KCNMA1 tetramer. There are probably 4 molecules of KCMNB1 per KCNMA1 tetramer. In terms of processing, N-glycosylated. In terms of tissue distribution, abundantly expressed in smooth muscle. Low levels of expression in most other tissues. Within the brain, relatively high levels found in hippocampus and corpus callosum.

It is found in the membrane. Regulatory subunit of the calcium activated potassium KCNMA1 (maxiK) channel. Modulates the calcium sensitivity and gating kinetics of KCNMA1, thereby contributing to KCNMA1 channel diversity. Increases the apparent Ca(2+)/voltage sensitivity of the KCNMA1 channel. It also modifies KCNMA1 channel kinetics and alters its pharmacological properties. It slows down the activation and the deactivation kinetics of the channel. Acts as a negative regulator of smooth muscle contraction by enhancing the calcium sensitivity to KCNMA1. Its presence is also a requirement for internal binding of the KCNMA1 channel opener dehydrosoyasaponin I (DHS-1) triterpene glycoside and for external binding of the agonist hormone 17-beta-estradiol (E2). Increases the binding activity of charybdotoxin (CTX) toxin to KCNMA1 peptide blocker by increasing the CTX association rate and decreasing the dissociation rate. This is Calcium-activated potassium channel subunit beta-1 (KCNMB1) from Homo sapiens (Human).